The sequence spans 363 residues: Trans-2,3-enoyl-CoA reductase-like (363 aa).

Ser-37 is subject to Phosphoserine. The next 3 membrane-spanning stretches (helical) occupy residues 143–163, 217–237, and 311–331; these read WTTVFLAEYTGPLLIYLLFYL, LIMSCAFYWGFTSWIAYYINH, and ISFTVMTQTLPVGIFTLLMSI.

This sequence belongs to the steroid 5-alpha reductase family. In terms of tissue distribution, predominantly expressed in the heart and skeletal muscle.

The protein localises to the membrane. It is found in the endoplasmic reticulum. The chain is Trans-2,3-enoyl-CoA reductase-like (TECRL) from Homo sapiens (Human).